We begin with the raw amino-acid sequence, 199 residues long: Glycerol-3-phosphate acyltransferase (199 aa).

4 helical membrane-spanning segments follow: residues Leu2 to Val22, Pro77 to Leu97, Ile113 to Ala133, and Leu139 to Leu159.

It belongs to the PlsY family. In terms of assembly, probably interacts with PlsX.

The protein localises to the cell membrane. It catalyses the reaction an acyl phosphate + sn-glycerol 3-phosphate = a 1-acyl-sn-glycero-3-phosphate + phosphate. It participates in lipid metabolism; phospholipid metabolism. Its function is as follows. Catalyzes the transfer of an acyl group from acyl-phosphate (acyl-PO(4)) to glycerol-3-phosphate (G3P) to form lysophosphatidic acid (LPA). This enzyme utilizes acyl-phosphate as fatty acyl donor, but not acyl-CoA or acyl-ACP. The chain is Glycerol-3-phosphate acyltransferase from Rubrobacter xylanophilus (strain DSM 9941 / JCM 11954 / NBRC 16129 / PRD-1).